The following is a 290-amino-acid chain: 4-hydroxybenzoate octaprenyltransferase (290 aa).

6 consecutive transmembrane segments (helical) span residues 41 to 61, 89 to 109, 133 to 153, 158 to 178, 202 to 224, and 269 to 289; these read WPLV…GCAM, WEAV…ILPL, FFAI…PMAF, GTVP…SVAY, FGRF…YAWI, and WLGG…GAAG.

This sequence belongs to the UbiA prenyltransferase family. The cofactor is Mg(2+).

The protein resides in the cell inner membrane. It catalyses the reaction all-trans-octaprenyl diphosphate + 4-hydroxybenzoate = 4-hydroxy-3-(all-trans-octaprenyl)benzoate + diphosphate. It functions in the pathway cofactor biosynthesis; ubiquinone biosynthesis. In terms of biological role, catalyzes the prenylation of para-hydroxybenzoate (PHB) with an all-trans polyprenyl group. Mediates the second step in the final reaction sequence of ubiquinone-8 (UQ-8) biosynthesis, which is the condensation of the polyisoprenoid side chain with PHB, generating the first membrane-bound Q intermediate 3-octaprenyl-4-hydroxybenzoate. The sequence is that of 4-hydroxybenzoate octaprenyltransferase from Burkholderia vietnamiensis (strain G4 / LMG 22486) (Burkholderia cepacia (strain R1808)).